We begin with the raw amino-acid sequence, 619 residues long: Zinc finger protein 131 (619 aa).

A BTB domain is found at 34–98; the sequence is TDITLIVDGH…TYTAKLMIQG (65 aa). Residues 137 to 148 carry the Nuclear localization signal 1 motif; sequence TGKNEAKKRKIA. The residue at position 231 (Ser-231) is a Phosphoserine. 3 consecutive C2H2-type zinc fingers follow at residues 261-283, 288-311, and 328-350; these read FHCE…MKSH, FKCE…NCYH, and HICQ…LRKH. Glycyl lysine isopeptide (Lys-Gly) (interchain with G-Cter in SUMO2) cross-links involve residues Lys-289 and Lys-295. Residues 317–328 carry the Nuclear localization signal 2 motif; the sequence is VSKKQRTGKKIH. A C2H2-type 4; degenerate zinc finger spans residues 356–381; that stretch reads FECSNCHERFARNSTLKCHLTACQTG. 2 consecutive C2H2-type zinc fingers follow at residues 392–414 and 420–443; these read YECQ…LVIH and NHCT…SDAH. Composition is skewed to basic and acidic residues over residues 574 to 587 and 595 to 612; these read QEER…AAME and LETK…ENDR. Positions 574–619 are disordered; it reads QEEREPNHADAAMEEHEDAEGLETKPSEYSQARKTENDRTSLPVLE. Residue Lys-598 forms a Glycyl lysine isopeptide (Lys-Gly) (interchain with G-Cter in SUMO) linkage.

It belongs to the krueppel C2H2-type zinc-finger protein family. Monosumoylated at Lys-598 by CBX4 and UHRF2. Sumoylation may potentiate ZNF131 inhibition of estrogen signaling. Sumoylation does not interfere with ubiquitination. In terms of processing, ubiquitinated. In terms of tissue distribution, ubiquitously expressed. Predominant expression is found in the developing central nervous system with strongest signals in the forebrain, midbrain, and hindbrain areas and in the neural tube.

It localises to the nucleus. In terms of biological role, may be involved in transcriptional regulation as a repressor of ESR1/ER-alpha signaling. Plays a role during development and organogenesis as well as in the function of the adult central nervous system. The chain is Zinc finger protein 131 (Znf131) from Mus musculus (Mouse).